The primary structure comprises 431 residues: Adenylosuccinate synthetase (431 aa).

GTP is bound by residues 12–18 (GDEGKGK) and 40–42 (GHT). Asp-13 (proton acceptor) is an active-site residue. Mg(2+) is bound by residues Asp-13 and Gly-40. IMP contacts are provided by residues 13 to 16 (DEGK), 38 to 41 (NAGH), Thr-130, Arg-144, Gln-225, Thr-240, and Arg-304. His-41 (proton donor) is an active-site residue. Substrate is bound at residue 300-306 (STTGRPR). Residues Arg-306, 332-334 (KMD), and 414-416 (SIG) each bind GTP.

This sequence belongs to the adenylosuccinate synthetase family. Homodimer. Mg(2+) serves as cofactor.

Its subcellular location is the cytoplasm. It carries out the reaction IMP + L-aspartate + GTP = N(6)-(1,2-dicarboxyethyl)-AMP + GDP + phosphate + 2 H(+). The protein operates within purine metabolism; AMP biosynthesis via de novo pathway; AMP from IMP: step 1/2. Its function is as follows. Plays an important role in the de novo pathway of purine nucleotide biosynthesis. Catalyzes the first committed step in the biosynthesis of AMP from IMP. This Syntrophotalea carbinolica (strain DSM 2380 / NBRC 103641 / GraBd1) (Pelobacter carbinolicus) protein is Adenylosuccinate synthetase.